Reading from the N-terminus, the 1275-residue chain is Rho1 guanine nucleotide exchange factor 3 (1275 aa).

Disordered stretches follow at residues 1–42 (MKLS…SFQK), 56–113 (SPPF…NSAA), 131–188 (NNPL…SPYS), and 214–248 (LSPT…VEYL). A compositionally biased stretch (basic and acidic residues) spans 7–17 (LFHRSSKDHGG). 3 stretches are compositionally biased toward polar residues: residues 32 to 42 (PHSSSPPSFQK), 80 to 113 (ASIN…NSAA), and 142 to 151 (SPGNKQNTVD). 2 stretches are compositionally biased toward low complexity: residues 178-188 (SSVSSHSSPYS) and 214-228 (LSPT…SPIR). S293 bears the Phosphoserine mark. The 193-residue stretch at 465-657 (ARQNNIHELI…RATCEECDAV (193 aa)) folds into the DH domain. The region spanning 692–855 (EFFFEGIVQR…WVEKINVAKK (164 aa)) is the PH domain. Residues 930-1239 (YGDISCIAQF…KYYPSNSDWL (310 aa)) form the CNH domain.

The protein resides in the cytoplasm. Stimulates the exchange of Rho1 GDP-bound form into GTP-bound form. Regulates, via interaction and activation of Rho1, beta-1,3-glucan biosynthesis and cell wall integrity during septation. Involved in the regulation of contractile ring assembly. This chain is Rho1 guanine nucleotide exchange factor 3 (rgf3), found in Schizosaccharomyces pombe (strain 972 / ATCC 24843) (Fission yeast).